The sequence spans 97 residues: Kininogen-1 (97 aa).

Residues 1 to 23 (MRLWFCLSFLIILCVEHFPGTLA) form the signal peptide.

It belongs to the bradykinin-related peptide family. In terms of tissue distribution, expressed by the skin glands.

It is found in the secreted. [Ala3,Thr6]bradykinin: produces in vitro relaxation of rat arterial smooth muscle and constriction of intestinal smooth muscle. Possesses insulin-releasing activity. May target bradykinin receptors (BDKRB). The polypeptide is Kininogen-1 (Bombina variegata (Yellow-bellied toad)).